A 250-amino-acid chain; its full sequence is Bacteriorhodopsin-II (250 aa).

The next 7 membrane-spanning stretches (helical) occupy residues 14-34, 49-69, 89-109, 114-134, 142-162, 183-203, and 210-230; these read EGIW…YFMA, VITI…FFGF, YADW…LAGA, MASL…ATLM, AFWT…VVVV, IILV…EGLG, and ETLL…FILL. At lysine 222 the chain carries N6-(retinylidene)lysine.

The protein belongs to the archaeal/bacterial/fungal opsin family. The covalent binding of retinal to the apoprotein, bacterioopsin, generates bacteriorhodopsin.

The protein localises to the membrane. Light-driven proton pump. This Haloarcula marismortui (strain ATCC 43049 / DSM 3752 / JCM 8966 / VKM B-1809) (Halobacterium marismortui) protein is Bacteriorhodopsin-II (xop1).